Consider the following 357-residue polypeptide: Peptide chain release factor 1 (357 aa).

Glutamine 234 bears the N5-methylglutamine mark.

This sequence belongs to the prokaryotic/mitochondrial release factor family. In terms of processing, methylated by PrmC. Methylation increases the termination efficiency of RF1.

It localises to the cytoplasm. Peptide chain release factor 1 directs the termination of translation in response to the peptide chain termination codons UAG and UAA. The polypeptide is Peptide chain release factor 1 (Lactococcus lactis subsp. cremoris (strain MG1363)).